Here is a 206-residue protein sequence, read N- to C-terminus: Probable N-acetyltransferase 14 (206 aa).

The N-acetyltransferase domain maps to 6 to 206; the sequence is LSVREMREDE…MLVREFSKDL (201 aa). Residues 57–77 traverse the membrane as a helical segment; sequence FILASFALALLLPVFLAVAAV.

This sequence belongs to the camello family.

The protein resides in the membrane. Probable acetyltransferase that binds the 5'-GGACTACAG-3' sequence of coproporphyrinogen oxidase promoter. Able to activate transcription of a reporter construct in vitro. Its function is as follows. Probable acetyltransferase. Functionally, may act as a transcription factor regulating the expression of coproporphyrinogen oxidase by binding to a promoter regulatory element. This is Probable N-acetyltransferase 14 (Nat14) from Mus musculus (Mouse).